Reading from the N-terminus, the 173-residue chain is uncharacterized protein (173 aa).

This is an uncharacterized protein from Bacillus subtilis (strain 168).